Here is a 55-residue protein sequence, read N- to C-terminus: MKIIYAFLLIAVVAFMGSGIMAESLAEAIADKPGQAKKIGIFDRITELVNWLVNH.

Residues 1-22 (MKIIYAFLLIAVVAFMGSGIMA) form the signal peptide. The propeptide occupies 23–29 (ESLAEAI).

It belongs to the formicidae venom clade 4 family. As to expression, expressed by the venom gland.

The protein localises to the secreted. Probable neurotoxin. The sequence is that of Myrmicitoxin(1)-Pr6b from Pogonomyrmex rugosus (Desert harvester ant).